Reading from the N-terminus, the 178-residue chain is Large ribosomal subunit protein uL6 (178 aa).

It belongs to the universal ribosomal protein uL6 family. Part of the 50S ribosomal subunit.

Functionally, this protein binds to the 23S rRNA, and is important in its secondary structure. It is located near the subunit interface in the base of the L7/L12 stalk, and near the tRNA binding site of the peptidyltransferase center. The polypeptide is Large ribosomal subunit protein uL6 (Buchnera aphidicola subsp. Acyrthosiphon pisum (strain APS) (Acyrthosiphon pisum symbiotic bacterium)).